The following is a 141-amino-acid chain: Small ribosomal subunit protein eS12 (141 aa).

This sequence belongs to the eukaryotic ribosomal protein eS12 family. In terms of assembly, component of the small ribosomal subunit. Mature ribosomes consist of a small (40S) and a large (60S) subunit. The 40S subunit contains about 32 different proteins and 1 molecule of RNA (18S). The 60S subunit contains about 42 different proteins and 3 molecules of RNA (28S, 5.8S and 5S).

It is found in the cytoplasm. In terms of biological role, component of the ribosome, a large ribonucleoprotein complex responsible for the synthesis of proteins in the cell. The small ribosomal subunit (SSU) binds messenger RNAs (mRNAs) and translates the encoded message by selecting cognate aminoacyl-transfer RNA (tRNA) molecules. The large subunit (LSU) contains the ribosomal catalytic site termed the peptidyl transferase center (PTC), which catalyzes the formation of peptide bonds, thereby polymerizing the amino acids delivered by tRNAs into a polypeptide chain. The nascent polypeptides leave the ribosome through a tunnel in the LSU and interact with protein factors that function in enzymatic processing, targeting, and the membrane insertion of nascent chains at the exit of the ribosomal tunnel. In Plasmodium falciparum (isolate 3D7), this protein is Small ribosomal subunit protein eS12.